Consider the following 181-residue polypeptide: Ribosome maturation factor RimM (181 aa).

In terms of domain architecture, PRC barrel spans 103 to 181 (EGDYYWSQLE…EMVVDWDPEF (79 aa)).

The protein belongs to the RimM family. As to quaternary structure, binds ribosomal protein uS19.

It localises to the cytoplasm. An accessory protein needed during the final step in the assembly of 30S ribosomal subunit, possibly for assembly of the head region. Essential for efficient processing of 16S rRNA. May be needed both before and after RbfA during the maturation of 16S rRNA. It has affinity for free ribosomal 30S subunits but not for 70S ribosomes. The chain is Ribosome maturation factor RimM from Marinomonas sp. (strain MWYL1).